We begin with the raw amino-acid sequence, 222 residues long: Probable transaldolase (222 aa).

The active-site Schiff-base intermediate with substrate is lysine 91.

This sequence belongs to the transaldolase family. Type 3B subfamily.

Its subcellular location is the cytoplasm. It carries out the reaction D-sedoheptulose 7-phosphate + D-glyceraldehyde 3-phosphate = D-erythrose 4-phosphate + beta-D-fructose 6-phosphate. It participates in carbohydrate degradation; pentose phosphate pathway; D-glyceraldehyde 3-phosphate and beta-D-fructose 6-phosphate from D-ribose 5-phosphate and D-xylulose 5-phosphate (non-oxidative stage): step 2/3. Transaldolase is important for the balance of metabolites in the pentose-phosphate pathway. This chain is Probable transaldolase, found in Chlorobium chlorochromatii (strain CaD3).